Reading from the N-terminus, the 250-residue chain is Intermembrane phospholipid transport system lipoprotein MlaA (250 aa).

A signal peptide spans 1-18 (MKTKTILTALLSAIALTG). Cysteine 19 carries the N-palmitoyl cysteine lipid modification. Cysteine 19 is lipidated: S-diacylglycerol cysteine.

It belongs to the MlaA family.

It localises to the cell outer membrane. Functionally, involved in a phospholipid transport pathway that maintains lipid asymmetry in the outer membrane by retrograde trafficking of phospholipids from the outer membrane to the inner membrane. The polypeptide is Intermembrane phospholipid transport system lipoprotein MlaA (Haemophilus influenzae (strain ATCC 51907 / DSM 11121 / KW20 / Rd)).